A 288-amino-acid polypeptide reads, in one-letter code: Pyridoxal kinase PdxY (288 aa).

Residues Ser-12 and 47-48 (TQ) each bind substrate. Residues Asp-114, Glu-151, Lys-184, and 211–214 (RPLL) contribute to the ATP site. Residue Asp-225 coordinates substrate.

The protein belongs to the pyridoxine kinase family. PdxY subfamily. Homodimer. It depends on Mg(2+) as a cofactor.

It catalyses the reaction pyridoxal + ATP = pyridoxal 5'-phosphate + ADP + H(+). Its pathway is cofactor metabolism; pyridoxal 5'-phosphate salvage; pyridoxal 5'-phosphate from pyridoxal: step 1/1. Pyridoxal kinase involved in the salvage pathway of pyridoxal 5'-phosphate (PLP). Catalyzes the phosphorylation of pyridoxal to PLP. The sequence is that of Pyridoxal kinase PdxY from Pseudomonas syringae pv. syringae (strain B728a).